The primary structure comprises 87 residues: A-agglutinin-binding subunit (87 aa).

A signal peptide spans 1–18 (MQLLRCFSIFSVIASVLA). O-linked (Man...) threonine glycosylation occurs at Thr22. Residue Ser30 is glycosylated (O-linked (Man...) serine). O-linked (Man...) threonine glycosylation is present at Thr32. Ser39 carries an O-linked (Man...) serine glycan. O-linked (Man...) threonine glycosylation is present at Thr63. O-linked (Man...) serine glycosylation is present at Ser66. Thr75 carries an O-linked (Man...) threonine glycan.

In terms of assembly, heterodimer; disulfide-linked. Interacts with SAG1.

In terms of biological role, receptor binding subunit of the a-agglutinin heterodimer. S.cerevisiae a and alpha cells express the complementary cell surface glycoproteins a-agglutinin and alpha-agglutinin, respectively, which interact with one another to promote cellular aggregation during mating. This is A-agglutinin-binding subunit (AGA2) from Saccharomyces cerevisiae (strain ATCC 204508 / S288c) (Baker's yeast).